Here is a 287-residue protein sequence, read N- to C-terminus: Probable prolyl 4-hydroxylase 3 (287 aa).

Residues 1–16 (MAKLRHSRFQARKWST) are Cytoplasmic-facing. The chain crosses the membrane as a helical; Signal-anchor for type II membrane protein span at residues 17-37 (LMLVLFMLFMLTIVLLMLLAF). The Lumenal portion of the chain corresponds to 38–287 (GVFSLPINND…KWMHVGEYKI (250 aa)). Positions 159–282 (HGEGLQVLHY…KWSSTKWMHV (124 aa)) constitute a Fe2OG dioxygenase domain. Histidine 177 and aspartate 179 together coordinate Fe cation. Asparagine 218 is a glycosylation site (N-linked (GlcNAc...) asparagine). Fe cation is bound at residue histidine 263. Residue lysine 273 coordinates 2-oxoglutarate.

It belongs to the P4HA family. Fe(2+) serves as cofactor. The cofactor is L-ascorbate.

It localises to the endoplasmic reticulum membrane. The catalysed reaction is L-prolyl-[collagen] + 2-oxoglutarate + O2 = trans-4-hydroxy-L-prolyl-[collagen] + succinate + CO2. In terms of biological role, catalyzes the post-translational formation of 4-hydroxyproline in -Xaa-Pro-Gly- sequences in proline-rich peptide sequences of plant glycoproteins and other proteins. Hydroxyprolines are important constituent of many plant cell wall glycoproteins such as extensins, hydroxyproline-rich glycoproteins, lectins and arabinogalactan proteins. This is Probable prolyl 4-hydroxylase 3 from Arabidopsis thaliana (Mouse-ear cress).